Consider the following 328-residue polypeptide: NADH:quinone reductase (328 aa).

Residues 22 to 24 (GMQ), threonine 75, lysine 124, alanine 150, 178 to 180 (SGG), and 201 to 202 (GT) contribute to the FMN site.

It belongs to the nitronate monooxygenase family. Monomer. Requires FMN as cofactor.

It catalyses the reaction a quinone + NADH + H(+) = a quinol + NAD(+). Its function is as follows. Catalyzes the NADH-dependent reduction of a broad spectrum of quinone substrates, generating the corresponding hydroquinones. Highly prefers NADH to NADPH as a reducing substrate. Also displays a small NADH oxidase activity. Does not exhibit nitronate monooxygenase activity; is inactive against propionate 3-nitronate, 3-nitropropionate, nitroethane, 1-nitropropane, 2-nitropropane, and the anionic forms ethylnitronate, propyl-1-nitronate, and propyl-2-nitronate. Has no azoreductase activity since it is not able to reduce the azo dye methyl red with NADH. May be required to maintain an appropriate [NAD(+)]/[NADH] ratio for the catabolism of fatty acids in P.aeruginosa PAO1. The protein is NADH:quinone reductase of Pseudomonas aeruginosa (strain ATCC 15692 / DSM 22644 / CIP 104116 / JCM 14847 / LMG 12228 / 1C / PRS 101 / PAO1).